Here is a 468-residue protein sequence, read N- to C-terminus: Mothers against decapentaplegic homolog 1 (468 aa).

Met-1 bears the N-acetylmethionine mark. The MH1 domain maps to 12–136 (PAVKRLLGWK…YKRVESPVLP (125 aa)). Zn(2+) contacts are provided by Cys-64, Cys-109, Cys-121, and His-126. Residues 162–246 (NEPHMPLNAT…DGSQPMDTNM (85 aa)) form a disordered region. Low complexity predominate over residues 188–210 (PNSSYPNSPGSSSSTYPHSPTSS). Pro residues predominate over residues 221-232 (DTPPPAYLPPED). The segment covering 237–246 (DGSQPMDTNM) has biased composition (polar residues). Positions 274–468 (WCSIVYYELN…SPHNPISSVS (195 aa)) constitute an MH2 domain. The residue at position 325 (Thr-325) is a Phosphothreonine; by MINK1, TNIK and MAP4K4. Positions 421 to 431 (KGWGAEYHRQD) are L3 loop. 2 positions are modified to phosphoserine: Ser-466 and Ser-468.

It belongs to the dwarfin/SMAD family. In terms of assembly, found in a complex with SMAD4 and YY1. Interacts with HGS, NANOG and ZCCHC12. Upon C-terminus phosphorylation: forms trimers with another SMAD1 and the co-SMAD SMAD4. Interacts with PEBP2-alpha subunit, CREB-binding protein (CBP), p300, SMURF1, SMURF2, USP15 and HOXC8. Associates with ZNF423 or ZNF521 in response to BMP2 leading to activate transcription of BMP target genes. Interacts with SKOR1. Interacts (via MH2 domain) with LEMD3. Binding to LEMD3 results in at least a partial reduction of receptor-mediated phosphorylation. Forms a ternary complex with PSMB4 and OAZ1 before PSMB4 is incorporated into the 20S proteasome. Interacts (via MH2 domain) with FAM83G (via MH2 domain); in a SMAD4-independent manner. Interacts with ZC3H3. Interacts with TMEM119. Interacts (via MH1 and MH2 domains) with ZNF8. Interacts with RANBP3L; the interaction increases when SMAD1 is not phosphorylated and mediates SMAD1 nuclear export. Interacts with EGR1; this interaction inhibits SMAD1 dephosphorylation. Interacts with SMAD6. Interacts with YAP1. Interacts with MTMR4; negatively regulates BMP signaling through SMAD1 dephosphorylation and retention in endosomes. Phosphorylation of the C-terminal SVS motif by BMP type 1 receptor kinase activates SMAD1 by promoting dissociation from the receptor and trimerization with SMAD4. Phosphorylation by ERK2 MAP kinase in response to EGF or HGF prevents SMAD1 nuclear accumulation and transcriptional activity in response to BMP. Dephosphorylation, probably by PPM1A, induces its export from the nucleus to the cytoplasm. Dephosphorylation is inhibited by association with EGR1. Phosphorylation by CDK8/9 creates binding sites for YAP1, and subsequent phosphorylation by GSK3 switches off YAP1 binding and adds binding sites for SMURF1. Post-translationally, ubiquitinated by SMAD-specific E3 ubiquitin ligase SMURF1, leading to its degradation. Monoubiquitinated, leading to prevent DNA-binding. Deubiquitination by USP15 alleviates inhibition and promotes activation of TGF-beta target genes. Dephosphorylation, probably by PPM1A, induces its export from the nucleus to the cytoplasm. Phospho-SMAD1 is ubiquitinated by CHIP leading to disruption of the SMAD1-SMAD4 complex. As to expression, ubiquitous; present in liver, lung, stomach and spleen with lower level in heart, testes and skeletal muscle.

Its subcellular location is the cytoplasm. It localises to the nucleus. Functionally, transcriptional modulator that plays a role in various cellular processes, including embryonic development, cell differentiation, and tissue homeostasis. Upon BMP ligand binding to their receptors at the cell surface, is phosphorylated by activated type I BMP receptors (BMPRIs) and associates with SMAD4 to form an heteromeric complex which translocates into the nucleus acting as transcription factor. In turn, the hetero-trimeric complex recognizes cis-regulatory elements containing Smad Binding Elements (SBEs) to modulate the outcome of the signaling network. SMAD1/OAZ1/PSMB4 complex mediates the degradation of the CREBBP/EP300 repressor SNIP1. Positively regulates BMP4-induced expression of odontogenic development regulator MSX1 following IPO7-mediated nuclear import. The sequence is that of Mothers against decapentaplegic homolog 1 (Smad1) from Rattus norvegicus (Rat).